The primary structure comprises 487 residues: Chromosomal replication initiator protein DnaA (487 aa).

Positions 1 to 79 (MEKSKNIWSL…GYNNIVIVFT (79 aa)) are domain I, interacts with DnaA modulators. Residues 79 to 142 (TNQPPKTHSN…EEEPTNFKNP (64 aa)) form a domain II region. Positions 143-359 (FLKKRYTFEN…AAVTKLKAYI (217 aa)) are domain III, AAA+ region. 4 residues coordinate ATP: Gly-187, Gly-189, Lys-190, and Thr-191. Residues 360-487 (DLDNIEIDIE…TELMNKIKKN (128 aa)) are domain IV, binds dsDNA.

The protein belongs to the DnaA family. Oligomerizes as a right-handed, spiral filament on DNA at oriC.

The protein localises to the cytoplasm. Plays an essential role in the initiation and regulation of chromosomal replication. ATP-DnaA binds to the origin of replication (oriC) to initiate formation of the DNA replication initiation complex once per cell cycle. Binds the DnaA box (a 9 base pair repeat at the origin) and separates the double-stranded (ds)DNA. Forms a right-handed helical filament on oriC DNA; dsDNA binds to the exterior of the filament while single-stranded (ss)DNA is stabiized in the filament's interior. The ATP-DnaA-oriC complex binds and stabilizes one strand of the AT-rich DNA unwinding element (DUE), permitting loading of DNA polymerase. After initiation quickly degrades to an ADP-DnaA complex that is not apt for DNA replication. Binds acidic phospholipids. The protein is Chromosomal replication initiator protein DnaA of Borreliella burgdorferi (strain ZS7) (Borrelia burgdorferi).